The following is a 483-amino-acid chain: Pre-glycoprotein polyprotein GP complex (483 aa).

G2 carries N-myristoyl glycine; by host lipidation. At 2–17 (GQFISFMQEIPIFLQE) the chain is on the extracellular side. A helical membrane pass occupies residues 18-32 (ALNIALVAVSLICIV). A topological domain (cytoplasmic) is located at residue K33. A helical membrane pass occupies residues 34–53 (GLVNLYRCGLFQLMVFLVLA). Extracellular-facing segments span residues 54 to 58 (GRSCS) and 59 to 422 (EETF…TLVD). C57 contributes to the Zn(2+) binding site. N83 and N95 each carry an N-linked (GlcNAc...) asparagine; by host glycan. Intrachain disulfides connect C92–C224, C134–C162, C205–C211, C269–C282, C291–C300, and C354–C375. N164 and N176 each carry an N-linked (GlcNAc...) asparagine; by host glycan. Residues N355, N363, N380, and N385 are each glycosylated (N-linked (GlcNAc...) asparagine; by host). A helical membrane pass occupies residues 423 to 443 (ICFWSTVFFTSTLFLHLIGFP). At 444-483 (THEHIRGEGCPLPHRLNSMGGCRCGKYLPLKKPTIWHRRH) the chain is on the cytoplasmic side. Zn(2+)-binding residues include H445, H447, C453, H457, C465, C467, and H483.

The protein belongs to the arenaviridae GPC protein family. Homotetramer; disulfide-linked. As to quaternary structure, homotetramer. GP2 homotetramers bind through ionic interactions with GP1 homotetramers to form the GP complex together with the stable signal peptide. The GP-C polyprotein interacts with the host protease MBTPS1/SKI-1 resulting in the polyprotein processing. In terms of processing, specific enzymatic cleavages in vivo yield mature proteins. GP-C polyprotein is cleaved in the endoplasmic reticulum by the host protease MBTPS1. Only cleaved glycoprotein is incorporated into virions. Post-translationally, the SSP remains stably associated with the GP complex following cleavage by signal peptidase and plays crucial roles in the trafficking of GP through the secretory pathway. Myristoylation is necessary for GP2-mediated fusion activity.

The protein localises to the virion membrane. It is found in the host endoplasmic reticulum membrane. The protein resides in the host Golgi apparatus membrane. It localises to the host cell membrane. Class I viral fusion protein that directs fusion of viral and host endosomal membranes, leading to delivery of the nucleocapsid into the cytoplasm. Membrane fusion is mediated by irreversible conformational changes induced upon acidification in the endosome. In terms of biological role, stable signal peptide (SSP): cleaved and functions as a signal peptide. In addition, it is also retained as the third component of the GP complex. The SSP is required for efficient glycoprotein expression, post-translational maturation cleavage of GP1 and GP2, glycoprotein transport to the cell surface plasma membrane, formation of infectious virus particles, and acid pH-dependent glycoprotein-mediated cell fusion. Functionally, interacts with the host receptor. This Tacaribe virus (strain V5) (TCRV) protein is Pre-glycoprotein polyprotein GP complex.